A 157-amino-acid polypeptide reads, in one-letter code: 2-C-methyl-D-erythritol 2,4-cyclodiphosphate synthase (157 aa).

Positions 9 and 11 each coordinate a divalent metal cation. 4-CDP-2-C-methyl-D-erythritol 2-phosphate-binding positions include 9 to 11 (DVH) and 35 to 36 (HS). His43 is an a divalent metal cation binding site. 4-CDP-2-C-methyl-D-erythritol 2-phosphate is bound by residues 57–59 (DIG), 62–66 (FPDTD), 101–107 (AEKPKMA), 133–136 (TTTE), Phe140, and Arg143.

The protein belongs to the IspF family. As to quaternary structure, homotrimer. It depends on a divalent metal cation as a cofactor.

It catalyses the reaction 4-CDP-2-C-methyl-D-erythritol 2-phosphate = 2-C-methyl-D-erythritol 2,4-cyclic diphosphate + CMP. The protein operates within isoprenoid biosynthesis; isopentenyl diphosphate biosynthesis via DXP pathway; isopentenyl diphosphate from 1-deoxy-D-xylulose 5-phosphate: step 4/6. Its function is as follows. Involved in the biosynthesis of isopentenyl diphosphate (IPP) and dimethylallyl diphosphate (DMAPP), two major building blocks of isoprenoid compounds. Catalyzes the conversion of 4-diphosphocytidyl-2-C-methyl-D-erythritol 2-phosphate (CDP-ME2P) to 2-C-methyl-D-erythritol 2,4-cyclodiphosphate (ME-CPP) with a corresponding release of cytidine 5-monophosphate (CMP). In Listeria innocua serovar 6a (strain ATCC BAA-680 / CLIP 11262), this protein is 2-C-methyl-D-erythritol 2,4-cyclodiphosphate synthase.